The chain runs to 187 residues: RNA pyrophosphohydrolase (187 aa).

One can recognise a Nudix hydrolase domain in the interval Gly6–Thr149. The Nudix box motif lies at Gly38–Gly59.

It belongs to the Nudix hydrolase family. RppH subfamily. A divalent metal cation serves as cofactor.

Its function is as follows. Accelerates the degradation of transcripts by removing pyrophosphate from the 5'-end of triphosphorylated RNA, leading to a more labile monophosphorylated state that can stimulate subsequent ribonuclease cleavage. The sequence is that of RNA pyrophosphohydrolase from Nitrosomonas eutropha (strain DSM 101675 / C91 / Nm57).